The sequence spans 148 residues: Protein GLUTAMINE DUMPER 3 (148 aa).

Residues 1 to 24 (MEGRQYYPPRENVEGNRTTMGGGP) form a disordered region. Topologically, residues 1–34 (MEGRQYYPPRENVEGNRTTMGGGPHSPWHSPVPY) are extracellular. Residues 35 to 55 (LFGGLAAMLGLIAFALLILAC) traverse the membrane as a helical segment. The Cytoplasmic segment spans residues 56–148 (SYWRLSGYLD…RSSESNGETH (93 aa)). The VIMAG motif lies at 99–103 (VIMAG). Over residues 120-132 (CDDDDDEDDDVEG) the composition is skewed to acidic residues. A disordered region spans residues 120-148 (CDDDDDEDDDVEGSDQVVPRSSESNGETH). Polar residues predominate over residues 138 to 148 (PRSSESNGETH).

It belongs to the GLUTAMINE DUMPER 1 (TC 9.B.60) family. Expressed in the vascular tissues. Also detected in anthers.

It is found in the membrane. Its function is as follows. Probable subunit of an amino acid transporter involved in the regulation of the amino acid metabolism. Stimulates amino acid export by activating nonselective amino acid facilitators. Acts upstream genes involved in the salicylic acid (SA) pathway and in the geminivirus-host interaction. This Arabidopsis thaliana (Mouse-ear cress) protein is Protein GLUTAMINE DUMPER 3 (GDU3).